Consider the following 480-residue polypeptide: Aspartyl/glutamyl-tRNA(Asn/Gln) amidotransferase subunit B (480 aa).

Belongs to the GatB/GatE family. GatB subfamily. In terms of assembly, heterotrimer of A, B and C subunits.

The enzyme catalyses L-glutamyl-tRNA(Gln) + L-glutamine + ATP + H2O = L-glutaminyl-tRNA(Gln) + L-glutamate + ADP + phosphate + H(+). It carries out the reaction L-aspartyl-tRNA(Asn) + L-glutamine + ATP + H2O = L-asparaginyl-tRNA(Asn) + L-glutamate + ADP + phosphate + 2 H(+). Its function is as follows. Allows the formation of correctly charged Asn-tRNA(Asn) or Gln-tRNA(Gln) through the transamidation of misacylated Asp-tRNA(Asn) or Glu-tRNA(Gln) in organisms which lack either or both of asparaginyl-tRNA or glutaminyl-tRNA synthetases. The reaction takes place in the presence of glutamine and ATP through an activated phospho-Asp-tRNA(Asn) or phospho-Glu-tRNA(Gln). This Streptococcus agalactiae serotype III (strain NEM316) protein is Aspartyl/glutamyl-tRNA(Asn/Gln) amidotransferase subunit B.